The sequence spans 472 residues: Argininosuccinate lyase (472 aa).

It belongs to the lyase 1 family. Argininosuccinate lyase subfamily.

The protein resides in the cytoplasm. It carries out the reaction 2-(N(omega)-L-arginino)succinate = fumarate + L-arginine. It participates in amino-acid biosynthesis; L-arginine biosynthesis; L-arginine from L-ornithine and carbamoyl phosphate: step 3/3. This Synechococcus sp. (strain CC9311) protein is Argininosuccinate lyase.